The primary structure comprises 242 residues: Venom nerve growth factor 1 (242 aa).

An N-terminal signal peptide occupies residues 1–18 (MSMLCYTLIIAFLIGIWA). The propeptide occupies 19–125 (APQSEDNVPL…ALNRNIQAKR (107 aa)). 3 disulfides stabilise this stretch: cysteine 139/cysteine 203, cysteine 181/cysteine 231, and cysteine 191/cysteine 233.

Belongs to the NGF-beta family. As to quaternary structure, homodimer; non-covalently linked. Expressed by the venom gland.

It is found in the secreted. Nerve growth factor is important for the development and maintenance of the sympathetic and sensory nervous systems. It stimulates division and differentiation of sympathetic and embryonic sensory neurons as well as basal forebrain cholinergic neurons in the brain. Its relevance in the snake venom is not clear. However, it has been shown to inhibit metalloproteinase-dependent proteolysis of platelet glycoprotein Ib alpha, suggesting a metalloproteinase inhibition to prevent metalloprotease autodigestion and/or protection against prey proteases. Binds a lipid between the two protein chains in the homodimer. The lipid-bound form promotes histamine relase from mouse mast cells, contrary to the lipid-free form. This Pseudechis australis (Mulga snake) protein is Venom nerve growth factor 1.